A 168-amino-acid chain; its full sequence is Prolyl-tRNA synthetase associated domain-containing protein 1 (168 aa).

Belongs to the PRORSD1 family.

The protein is Prolyl-tRNA synthetase associated domain-containing protein 1 (prorsd1p) of Xenopus laevis (African clawed frog).